Consider the following 1043-residue polypeptide: Desmoglein-1 (1043 aa).

The signal sequence occupies residues 1–23 (MNWPFFRAAVVLFIFLVVLEVNS). The propeptide occupies 24–49 (DFRIQVRDYNTKNGTIKWHSLRRQKR). Cadherin domains lie at 50 to 158 (EWIK…PVFS), 159 to 270 (MSTF…PYME), 271 to 385 (LPTQ…GSVF), and 386 to 498 (RPGS…VNGS). Topologically, residues 50-551 (EWIKFAAACR…PLRDNVHFGP (502 aa)) are extracellular. 2 N-linked (GlcNAc...) asparagine glycosylation sites follow: asparagine 110 and asparagine 180. A glycan (N-linked (GlcNAc...) asparagine) is linked at asparagine 496. Residues 552-572 (AGIGLLIMGFLVLGLVPFLLM) traverse the membrane as a helical segment. At 573–1043 (CCDCGGAPGG…TKYSTVQYTK (471 aa)) the chain is on the cytoplasmic side. Residues 770–807 (DVEPFPDSDPSWPPKSTEPVCPPQGTEPTGGGHPPISP) form a disordered region. 5 Desmoglein repeat repeats span residues 819 to 845 (TYPS…TVTE), 846 to 875 (SYTS…ERVV), 876 to 905 (GPIS…ERVI), 906 to 933 (APSS…ERVI), and 934 to 962 (QPTS…ERVV).

As to quaternary structure, binds to JUP/plakoglobin. Interacts with PKP2. Interacts with DSC3; there is evidence to suggest that the interaction promotes cell-cell adhesion of keratinocytes. As to expression, expressed in the epidermis. Expressed in the muzzle epithelium.

It localises to the cell membrane. Its subcellular location is the cell junction. The protein localises to the desmosome. It is found in the cytoplasm. The protein resides in the nucleus. Functionally, component of intercellular desmosome junctions. Involved in the interaction of plaque proteins and intermediate filaments mediating cell-cell adhesion. The protein is Desmoglein-1 (DSG1) of Bos taurus (Bovine).